A 158-amino-acid chain; its full sequence is Large ribosomal subunit protein uL11 (158 aa).

The disordered stretch occupies residues 1 to 28 (MAGTIEALVPGGQATPGPPLGPELGPTP).

The protein belongs to the universal ribosomal protein uL11 family. As to quaternary structure, part of the ribosomal stalk of the 50S ribosomal subunit. Interacts with L10 and the large rRNA to form the base of the stalk. L10 forms an elongated spine to which L12 dimers bind in a sequential fashion forming a multimeric L10(L12)X complex.

In terms of biological role, forms part of the ribosomal stalk which helps the ribosome interact with GTP-bound translation factors. The sequence is that of Large ribosomal subunit protein uL11 from Halorubrum lacusprofundi (strain ATCC 49239 / DSM 5036 / JCM 8891 / ACAM 34).